Consider the following 340-residue polypeptide: Dihydroorotate dehydrogenase (quinone) (340 aa).

Residues 65-69 (AGADK) and Thr-89 contribute to the FMN site. Residue Lys-69 participates in substrate binding. A substrate-binding site is contributed by 114-118 (NRNGF). Residues Asn-142 and Asn-175 each coordinate FMN. Asn-175 contributes to the substrate binding site. Ser-178 functions as the Nucleophile in the catalytic mechanism. Asn-180 provides a ligand contact to substrate. FMN is bound by residues Lys-220 and Thr-248. Residue 249 to 250 (NT) coordinates substrate. FMN contacts are provided by residues Gly-271, Gly-300, and 321–322 (YS).

Belongs to the dihydroorotate dehydrogenase family. Type 2 subfamily. In terms of assembly, monomer. The cofactor is FMN.

The protein localises to the cell membrane. The enzyme catalyses (S)-dihydroorotate + a quinone = orotate + a quinol. It participates in pyrimidine metabolism; UMP biosynthesis via de novo pathway; orotate from (S)-dihydroorotate (quinone route): step 1/1. Catalyzes the conversion of dihydroorotate to orotate with quinone as electron acceptor. In Actinobacillus succinogenes (strain ATCC 55618 / DSM 22257 / CCUG 43843 / 130Z), this protein is Dihydroorotate dehydrogenase (quinone).